A 332-amino-acid chain; its full sequence is Cytochrome c oxidase subunit 2 (332 aa).

An N-terminal signal peptide occupies residues Met1–Ser20. 2 consecutive transmembrane segments (helical) span residues Met48–Ile68 and Val87–Tyr107. His214, Cys249, Cys253, and His257 together coordinate Cu cation.

Belongs to the cytochrome c oxidase subunit 2 family. It depends on Cu cation as a cofactor.

Its subcellular location is the cell membrane. It catalyses the reaction 4 Fe(II)-[cytochrome c] + O2 + 8 H(+)(in) = 4 Fe(III)-[cytochrome c] + 2 H2O + 4 H(+)(out). Functionally, subunits I and II form the functional core of the enzyme complex. Electrons originating in cytochrome c are transferred via heme a and Cu(A) to the binuclear center formed by heme a3 and Cu(B). This is Cytochrome c oxidase subunit 2 (ctaC) from Synechocystis sp. (strain ATCC 27184 / PCC 6803 / Kazusa).